The primary structure comprises 135 residues: HTH-type transcriptional regulator DicA (135 aa).

The 55-residue stretch at 12 to 66 (IRYRRKNLKHTQRSLAKALKISHVSVSQWERGDSEPTGKNLFALSKVLQCSPTWI) folds into the HTH cro/C1-type domain. Positions 23-42 (QRSLAKALKISHVSVSQWER) form a DNA-binding region, H-T-H motif.

Its function is as follows. This protein is a repressor of division inhibition gene dicB. This Escherichia coli (strain K12) protein is HTH-type transcriptional regulator DicA (dicA).